Reading from the N-terminus, the 154-residue chain is Proteinase inhibitor type-2 P303.51 (154 aa).

A signal peptide spans 1–25 (MAVHKEVNFVAYLLIVLGLLVLVSA). Tandem repeats lie at residues 31 to 87 (AKAC…DPKK) and 88 to 147 (PKAC…DEPK). Disulfide bonds link C34-C122, C38-C118, C46-C128, C58-C95, C61-C79, C62-C91, C68-C104, and C121-C139.

Belongs to the protease inhibitor I20 (potato type II proteinase inhibitor) family.

This is Proteinase inhibitor type-2 P303.51 from Solanum tuberosum (Potato).